Reading from the N-terminus, the 455-residue chain is Exodeoxyribonuclease 7 large subunit (455 aa).

Belongs to the XseA family. Heterooligomer composed of large and small subunits.

The protein resides in the cytoplasm. The catalysed reaction is Exonucleolytic cleavage in either 5'- to 3'- or 3'- to 5'-direction to yield nucleoside 5'-phosphates.. Functionally, bidirectionally degrades single-stranded DNA into large acid-insoluble oligonucleotides, which are then degraded further into small acid-soluble oligonucleotides. The sequence is that of Exodeoxyribonuclease 7 large subunit from Oceanobacillus iheyensis (strain DSM 14371 / CIP 107618 / JCM 11309 / KCTC 3954 / HTE831).